We begin with the raw amino-acid sequence, 209 residues long: Chloramphenicol acetyltransferase (209 aa).

His-78 is an active-site residue.

This sequence belongs to the transferase hexapeptide repeat family.

It carries out the reaction chloramphenicol + acetyl-CoA = chloramphenicol 3-acetate + CoA. Functionally, this enzyme is an effector of chloramphenicol resistance in bacteria. In Agrobacterium fabrum (strain C58 / ATCC 33970) (Agrobacterium tumefaciens (strain C58)), this protein is Chloramphenicol acetyltransferase (cat).